The chain runs to 443 residues: UDP-glucuronic acid decarboxylase 4 (443 aa).

N-acetylalanine is present on A2. Over 2 to 43 the chain is Cytoplasmic; the sequence is ASELTNRRHEIEQPEAESYYPKPIKPWFVAIRPIRYMLREQR. Residues 44-64 form a helical; Signal-anchor for type II membrane protein membrane-spanning segment; sequence LVFVLVGIAIATLGFTIFSKS. Topologically, residues 65-443 are lumenal; it reads SNHQPIPYDV…DSSTTSSSTE (379 aa). 151 to 176 provides a ligand contact to NAD(+); the sequence is DNFFTGRKENVMHHFNNPNFEMIRHD. R260 provides a ligand contact to substrate. Y263 functions as the Proton acceptor in the catalytic mechanism. 263-267 is a binding site for NAD(+); it reads YDEGK. N292 is a binding site for substrate. R304 contributes to the NAD(+) binding site. Residues 305-309, 322-329, and 389-393 contribute to the substrate site; these read VVSNF, YGDGKQTR, and DPHKR.

It belongs to the NAD(P)-dependent epimerase/dehydratase family. UDP-glucuronic acid decarboxylase subfamily. NAD(+) is required as a cofactor.

The protein resides in the golgi apparatus. Its subcellular location is the golgi stack membrane. It catalyses the reaction UDP-alpha-D-glucuronate + H(+) = UDP-alpha-D-xylose + CO2. It participates in nucleotide-sugar biosynthesis; UDP-alpha-D-xylose biosynthesis; UDP-alpha-D-xylose from UDP-alpha-D-glucuronate: step 1/1. Its function is as follows. Catalyzes the NAD-dependent decarboxylation of UDP-glucuronic acid to UDP-xylose. Necessary for the biosynthesis of the core tetrasaccharide in glycosaminoglycan biosynthesis. This Arabidopsis thaliana (Mouse-ear cress) protein is UDP-glucuronic acid decarboxylase 4 (UXS4).